Reading from the N-terminus, the 215-residue chain is Ribose-5-phosphate isomerase A (215 aa).

Substrate is bound by residues 26–29 (TGST), 79–82 (DGAD), and 92–95 (KGGG). The active-site Proton acceptor is the Glu101. A substrate-binding site is contributed by Lys119.

Belongs to the ribose 5-phosphate isomerase family. Homodimer.

It catalyses the reaction aldehydo-D-ribose 5-phosphate = D-ribulose 5-phosphate. It participates in carbohydrate degradation; pentose phosphate pathway; D-ribose 5-phosphate from D-ribulose 5-phosphate (non-oxidative stage): step 1/1. Its function is as follows. Catalyzes the reversible conversion of ribose-5-phosphate to ribulose 5-phosphate. The protein is Ribose-5-phosphate isomerase A of Xanthomonas campestris pv. campestris (strain 8004).